The sequence spans 32 residues: Trypsin inhibitor 3 (32 aa).

Intrachain disulfides connect Cys6-Cys23, Cys13-Cys25, and Cys19-Cys31.

It belongs to the protease inhibitor I7 (squash-type serine protease inhibitor) family.

The protein localises to the secreted. Its function is as follows. Inhibits trypsin. In Cucurbita pepo (Vegetable marrow), this protein is Trypsin inhibitor 3.